Reading from the N-terminus, the 236-residue chain is Small ribosomal subunit protein uS2c (236 aa).

This sequence belongs to the universal ribosomal protein uS2 family.

Its subcellular location is the plastid. The protein resides in the chloroplast. This chain is Small ribosomal subunit protein uS2c (rps2), found in Lemna minor (Common duckweed).